Reading from the N-terminus, the 123-residue chain is Large ribosomal subunit protein bL12 (123 aa).

It belongs to the bacterial ribosomal protein bL12 family. Homodimer. Part of the ribosomal stalk of the 50S ribosomal subunit. Forms a multimeric L10(L12)X complex, where L10 forms an elongated spine to which 2 to 4 L12 dimers bind in a sequential fashion. Binds GTP-bound translation factors.

Forms part of the ribosomal stalk which helps the ribosome interact with GTP-bound translation factors. Is thus essential for accurate translation. The protein is Large ribosomal subunit protein bL12 of Bartonella tribocorum (strain CIP 105476 / IBS 506).